The chain runs to 336 residues: Nitrilase (336 aa).

Residues 5-278 (LKVACVQAAP…EGLLYATLDP (274 aa)) form the CN hydrolase domain. Glutamate 45 functions as the Proton acceptor in the catalytic mechanism. Catalysis depends on lysine 127, which acts as the Proton donor. Cysteine 161 (nucleophile) is an active-site residue.

This sequence belongs to the carbon-nitrogen hydrolase superfamily. Nitrilase family.

The catalysed reaction is a nitrile + 2 H2O = a carboxylate + NH4(+). It catalyses the reaction (indol-3-yl)acetonitrile + 2 H2O = (indol-3-yl)acetate + NH4(+). It carries out the reaction phenylpropanonitrile + 2 H2O = 3-phenylpropanoate + NH4(+). In terms of biological role, arylacetonitrilase which is capable of hydrolyzing indole-3-acetonitrile (IAN) to the plant hormone indole-3-acetate (IAA), and allows the plant pathogenic bacterium to use IAN as a sole nitrogen source. Is also able to hydrolyze phenylpropionitrile (PPN), allowing the use of this compound as a sole nitrogen source. This enzyme may represent an additional mechanism for IAA biosynthesis or may be used to degrade and assimilate aldoximes and nitriles produced during host plant secondary metabolism. The polypeptide is Nitrilase (Pseudomonas syringae pv. syringae (strain B728a)).